The primary structure comprises 389 residues: NADH-quinone oxidoreductase subunit D (389 aa).

Belongs to the complex I 49 kDa subunit family. In terms of assembly, NDH-1 is composed of 14 different subunits. Subunits NuoB, C, D, E, F, and G constitute the peripheral sector of the complex.

It localises to the cell inner membrane. The catalysed reaction is a quinone + NADH + 5 H(+)(in) = a quinol + NAD(+) + 4 H(+)(out). NDH-1 shuttles electrons from NADH, via FMN and iron-sulfur (Fe-S) centers, to quinones in the respiratory chain. The immediate electron acceptor for the enzyme in this species is believed to be ubiquinone. Couples the redox reaction to proton translocation (for every two electrons transferred, four hydrogen ions are translocated across the cytoplasmic membrane), and thus conserves the redox energy in a proton gradient. The sequence is that of NADH-quinone oxidoreductase subunit D from Rickettsia typhi (strain ATCC VR-144 / Wilmington).